We begin with the raw amino-acid sequence, 1057 residues long: Exportin-1 (1057 aa).

The 67-residue stretch at 36 to 102 folds into the Importin N-terminal domain; the sequence is AQMVLGKFQE…KNYIVSLIIR (67 aa). 11 HEAT repeats span residues 239 to 275, 281 to 321, 462 to 501, 506 to 544, 551 to 588, 596 to 633, 739 to 776, 781 to 818, 855 to 892, 902 to 925, and 926 to 965; these read AEPSKLVKLLLHKYFPEPLFRNSTLKCLTEIGNLNLG, AVFI…FIHT, NTQHIMLEKLQTLISGREFTFQRLNTLCWAIGSISGAQNK, RFLVTVIKDLLELCQNKKGKDNKAVIASDIMYIVGQYPR, KFLKTVVNKLFEFMHESHPGVQDMACDTFLKISKQCKR, EESQPFINELLNQLSTTIAHLEQSQIHTFYEAVGYMIA, KETLKLLETFIEKSSDKQVIYSNFLQPLLEAVLGDYRT, TRDPEVLSLMTAIITSLKQLVHPEVPKILEAVFETTLS, QQFKLLIDCVVWAFKHTERNISETGLHILKELIENVSK, KTYLVSLLNDILYILTDSFHKSGF, and ALECDILRMMFQVVENGVVKIPLFDPQQANFPSNSEYVKE.

Belongs to the exportin family. As to quaternary structure, component of a nuclear export receptor complex.

Its subcellular location is the nucleus. The protein resides in the cytoplasm. The protein localises to the perinuclear region. In terms of biological role, mediates the nuclear export of cellular proteins (cargos) bearing a leucine-rich nuclear export signal (NES). In Dictyostelium discoideum (Social amoeba), this protein is Exportin-1 (xpo1).